A 698-amino-acid chain; its full sequence is Polyribonucleotide nucleotidyltransferase (698 aa).

2 residues coordinate Mg(2+): aspartate 490 and aspartate 496. The KH domain maps to 557-616 (PKVVTMTIKPDKIRDVIGPGGKKINEIIDETGVKLDIEQDGTIFIGAVDQAMINRAREII). The S1 motif domain maps to 626 to 694 (GQTYQATVKR…KQGRVNASHR (69 aa)).

The protein belongs to the polyribonucleotide nucleotidyltransferase family. The cofactor is Mg(2+).

The protein resides in the cytoplasm. The catalysed reaction is RNA(n+1) + phosphate = RNA(n) + a ribonucleoside 5'-diphosphate. Functionally, involved in mRNA degradation. Catalyzes the phosphorolysis of single-stranded polyribonucleotides processively in the 3'- to 5'-direction. This Staphylococcus aureus (strain Mu3 / ATCC 700698) protein is Polyribonucleotide nucleotidyltransferase.